A 543-amino-acid polypeptide reads, in one-letter code: MASQGGPRRSLSVTTASLHGKKKSMDMAERGLDTGRRSLTVSRSPLGLTGGERTVKRLRLSKALTVPATTTIYEACKRMASRRVDALLLTDSNEMLCGILTDKDIATRVISQELNVEETPVSKVMTKNPMFVLSETLAVEALQKMVQGKFRHLPVVENGEVIALLDIAKCLYDAIARMERAAEKGKAIAAAVEGVEKSWGTNTSVPNTFIETLRDRMFRPSLSTIIPDDTKVLKVSPTDTVLTVAKKMVEFQSSCAVVIIEDKLRGIFTSKDILMRVVAENLPPSETLVETVMTQNPESTIVDTPIVEALHIMHEGKFLHLPVTDKEGDVVAVVDVIHVTHAAVATAGTTAGIGNEATNTMMQKFWDSAMALSPNEDDEDSRSESSMKVASEAETGKSFPFANTFSFKIEDKKHRKHRFISDTRSLTEVITAIIQRVGDDIDPDNFPQILYEDEDHDKVLLASDSDLQAAIEHAKSIGWKSLRLHLDDSREGKGRRRRRASGSAESMEYVETDAWAAAYSGVAAGAALVAGLGFMAFLRKFGH.

Positions M1 to G35 are disordered. S17 bears the Phosphoserine mark. Basic and acidic residues predominate over residues K23–G35. CBS domains lie at R59–E118, M125–E183, I225–S285, and M293–T350. A disordered region spans residues L372–A393. The region spanning A402–S489 is the PB1 domain. Residues A518 to L538 traverse the membrane as a helical segment.

It localises to the membrane. This is CBS domain-containing protein CBSCBSPB1 (CBSCBSPB1) from Arabidopsis thaliana (Mouse-ear cress).